A 344-amino-acid polypeptide reads, in one-letter code: BURP domain-containing protein 16 (344 aa).

The signal sequence occupies residues 1–25 (MATSFLFSLILLLITALSLPFPLHA). Residues Asn-90, Asn-120, Asn-181, and Asn-333 are each glycosylated (N-linked (GlcNAc...) asparagine). The BURP domain maps to 128-341 (FFREQELKEG…FNGSMTWVIA (214 aa)).

As to expression, expressed in roots, stems, leaves and panicles.

In Oryza sativa subsp. japonica (Rice), this protein is BURP domain-containing protein 16 (BURP16).